A 125-amino-acid chain; its full sequence is uncharacterized protein (125 aa).

This is an uncharacterized protein from Mycoplasma (Bacteriophage L2).